The chain runs to 323 residues: Global nitrogen regulator NrpRI (323 aa).

A winged helix-turn-helix region spans residues I11–M76. An NRD region spans residues G86–I323.

It belongs to the NrpR family. Forms a complex with NrpRII and the general archaeal transcription factors TBP and TFB. Interacts directly with NrpRII.

Under nitrogen limitation, binding of 2-oxoglutarate to the NrpRI/NrpRII complex decreases the binding affinity of NrpRI to DNA as well as the binding affinity of NrpRII to TBP and TFB, which leads to removal of the complex from the operator, RNA polymerase recruitment and initiation of transcription. In terms of biological role, plays a major role in nitrogen regulation. Under nitrogen sufficiency, binds to the nifH and the glnk1 promoters, leading to repression of the transcription of the genes. The chain is Global nitrogen regulator NrpRI from Methanosarcina mazei (strain ATCC BAA-159 / DSM 3647 / Goe1 / Go1 / JCM 11833 / OCM 88) (Methanosarcina frisia).